We begin with the raw amino-acid sequence, 579 residues long: CTP synthase (579 aa).

The interval 1–281 (MPALRKHPQT…DAYVVRRLNL (281 aa)) is amidoligase domain. Residue S23 participates in CTP binding. S23 contributes to the UTP binding site. ATP contacts are provided by residues 24 to 29 (SLGKGL) and D81. 2 residues coordinate Mg(2+): D81 and E155. CTP is bound by residues 162–164 (DIE), 202–207 (KTKPTQ), and K238. UTP contacts are provided by residues 202–207 (KTKPTQ) and K238. The region spanning 306–554 (RIALVGKYID…IGAALDYKAA (249 aa)) is the Glutamine amidotransferase type-1 domain. Residue G369 coordinates L-glutamine. Residue C396 is the Nucleophile; for glutamine hydrolysis of the active site. Residues 397–400 (LGLQ), E419, and R480 contribute to the L-glutamine site. Residues H527 and E529 contribute to the active site.

Belongs to the CTP synthase family. In terms of assembly, homotetramer.

It carries out the reaction UTP + L-glutamine + ATP + H2O = CTP + L-glutamate + ADP + phosphate + 2 H(+). The enzyme catalyses L-glutamine + H2O = L-glutamate + NH4(+). It catalyses the reaction UTP + NH4(+) + ATP = CTP + ADP + phosphate + 2 H(+). It participates in pyrimidine metabolism; CTP biosynthesis via de novo pathway; CTP from UDP: step 2/2. With respect to regulation, allosterically activated by GTP, when glutamine is the substrate; GTP has no effect on the reaction when ammonia is the substrate. The allosteric effector GTP functions by stabilizing the protein conformation that binds the tetrahedral intermediate(s) formed during glutamine hydrolysis. Inhibited by the product CTP, via allosteric rather than competitive inhibition. Its function is as follows. Catalyzes the ATP-dependent amination of UTP to CTP with either L-glutamine or ammonia as the source of nitrogen. Regulates intracellular CTP levels through interactions with the four ribonucleotide triphosphates. This is CTP synthase from Mycobacterium sp. (strain JLS).